Here is a 375-residue protein sequence, read N- to C-terminus: Dehydrodolichyl diphosphate synthase complex subunit NUS1 (375 aa).

A compositionally biased stretch (basic and acidic residues) spans 1 to 28 (MPTMIKKDDKAMEPPNEKPHRKIERDDV). The segment at 1 to 48 (MPTMIKKDDKAMEPPNEKPHRKIERDDVPESSNHIPPPESGVLKGGKV) is disordered. Residues 97 to 119 (YLFYKFLLVLLYICFGLFRYGQY) form a helical membrane-spanning segment.

It belongs to the UPP synthase family. As to quaternary structure, forms an active dehydrodolichyl diphosphate synthase complex with either SRT1 or RER2. Requires Mg(2+) as cofactor.

Its subcellular location is the endoplasmic reticulum membrane. The protein localises to the lipid droplet. It localises to the nucleus membrane. The enzyme catalyses n isopentenyl diphosphate + (2E,6E)-farnesyl diphosphate = a di-trans,poly-cis-polyprenyl diphosphate + n diphosphate. Its pathway is protein modification; protein glycosylation. Functionally, with SRT1 or RER2, forms the dehydrodolichyl diphosphate synthase (DDS) complex, an essential component of the dolichol monophosphate (Dol-P) biosynthetic machinery. Adds multiple copies of isopentenyl pyrophosphate (IPP) to farnesyl pyrophosphate (FPP) to produce dehydrodolichyl diphosphate (Dedol-PP), a precursor of dolichol which is utilized as a sugar carrier in protein glycosylation in the endoplasmic reticulum (ER). The chain is Dehydrodolichyl diphosphate synthase complex subunit NUS1 (NUS1) from Saccharomyces cerevisiae (strain ATCC 204508 / S288c) (Baker's yeast).